Here is an 87-residue protein sequence, read N- to C-terminus: Down syndrome critical region protein 10 (87 aa).

The sequence is that of Down syndrome critical region protein 10 (DSCR10) from Pan troglodytes (Chimpanzee).